The sequence spans 134 residues: U-scoloptoxin(05)-Er2a (134 aa).

The signal sequence occupies residues 1–19; sequence MTFVVAAVVLLTVVPLATP.

Belongs to the scoloptoxin-05 family. In terms of processing, contains 5 disulfide bonds. In terms of tissue distribution, expressed by the venom gland.

Its subcellular location is the secreted. The protein is U-scoloptoxin(05)-Er2a of Ethmostigmus rubripes (Giant centipede).